Here is a 114-residue protein sequence, read N- to C-terminus: Ribonuclease P protein component (114 aa).

The protein belongs to the RnpA family. Consists of a catalytic RNA component (M1 or rnpB) and a protein subunit.

The enzyme catalyses Endonucleolytic cleavage of RNA, removing 5'-extranucleotides from tRNA precursor.. Its function is as follows. RNaseP catalyzes the removal of the 5'-leader sequence from pre-tRNA to produce the mature 5'-terminus. It can also cleave other RNA substrates such as 4.5S RNA. The protein component plays an auxiliary but essential role in vivo by binding to the 5'-leader sequence and broadening the substrate specificity of the ribozyme. The protein is Ribonuclease P protein component of Clostridioides difficile (strain 630) (Peptoclostridium difficile).